Consider the following 520-residue polypeptide: Sodium-dependent dicarboxylate transporter SdcS (520 aa).

The next 14 membrane-spanning stretches (helical) occupy residues 30-50 (AGQL…LLFF), 55-75 (LPWK…WWIT), 77-97 (AIPI…GHIL), 104-124 (SEYG…AIAM), 160-180 (SMFV…LAII), 207-227 (IGYA…PLII), 242-262 (FAKW…ITWL), 298-318 (KVVQ…EFLL), 323-343 (VTSS…LFII), 362-382 (ELPW…KGIS), 399-419 (GVSP…LTEV), 428-448 (MILP…LLLM), 452-472 (AMAA…AIIF), and 491-511 (LISA…VLGI).

The protein belongs to the SLC13A/DASS transporter (TC 2.A.47) family. NADC subfamily.

Its subcellular location is the cell membrane. Mediates the transport of the dicarboxylates fumarate, malate, and succinate across the cytoplasmic membrane via a Na(+)-electrochemical gradient. This chain is Sodium-dependent dicarboxylate transporter SdcS (sdcS), found in Staphylococcus aureus (strain USA300).